The following is a 483-amino-acid chain: Regulatory protein ViaA (483 aa).

It belongs to the ViaA family. In terms of assembly, homodimer. Interacts with RavA.

It localises to the cytoplasm. Its function is as follows. Component of the RavA-ViaA chaperone complex, which may act on the membrane to optimize the function of some of the respiratory chains. ViaA stimulates the ATPase activity of RavA. This Escherichia coli O7:K1 (strain IAI39 / ExPEC) protein is Regulatory protein ViaA.